The following is a 73-amino-acid chain: Small ribosomal subunit protein bS18c (73 aa).

It belongs to the bacterial ribosomal protein bS18 family. Part of the 30S ribosomal subunit.

It localises to the plastid. It is found in the chloroplast. This is Small ribosomal subunit protein bS18c (rps18) from Guillardia theta (Cryptophyte).